A 3166-amino-acid polypeptide reads, in one-letter code: Intermembrane lipid transfer protein VPS13A (3166 aa).

One can recognise a Chorein N-terminal domain in the interval 3–116 (FESVVVEVLN…LMETKQQELK (114 aa)). 2 TPR repeats span residues 212 to 245 (LFAY…ENIV) and 373 to 406 (LTSK…QQAE). Residue Thr831 is modified to Phosphothreonine. A Phosphoserine modification is found at Ser835. The FFAT motif lies at 838-844 (EFFDAPC). Polar residues predominate over residues 1343–1359 (APSSANKDPETMTSGVT). Residues 1343–1365 (APSSANKDPETMTSGVTSPPDHS) form a disordered region. Residue Ser1410 is modified to Phosphoserine. TPR repeat units lie at residues 1806-1840 (AIVE…TLSK) and 1999-2034 (ISVF…VPED). One can recognise an SHR-BD domain in the interval 2202-2447 (VAFHSPYWMV…VYYTWADPVG (246 aa)). Required for mitochondrial localization stretches follow at residues 2607–3166 (LQPH…SPRL) and 2743–3166 (EYEV…SPRL). 2 TPR repeats span residues 2716–2750 (ADLV…VSSV) and 2852–2890 (ILGL…PEEF). The interval 2945-3019 (PAGLREGITR…SSTFQGIKRA (75 aa)) is required for lipid droplet localization.

It belongs to the VPS13 family. As to quaternary structure, interacts (via FFAT motif) with VAPA and VAPB. Interacts with RAB7A. Interacts with XK.

It is found in the mitochondrion outer membrane. It localises to the endoplasmic reticulum membrane. The protein localises to the endosome membrane. The protein resides in the lysosome membrane. Its subcellular location is the lipid droplet. It is found in the golgi apparatus. It localises to the cytoplasmic vesicle. The protein localises to the secretory vesicle. The protein resides in the neuronal dense core vesicle. In terms of biological role, mediates the transfer of lipids between membranes at organelle contact sites. Required for the formation or stabilization of ER-mitochondria contact sites which enable transfer of lipids between the ER and mitochondria. Negatively regulates lipid droplet size and motility. Required for efficient lysosomal protein degradation. The sequence is that of Intermembrane lipid transfer protein VPS13A from Mus musculus (Mouse).